The sequence spans 447 residues: Phosphoglucosamine mutase (447 aa).

Ser-104 (phosphoserine intermediate) is an active-site residue. The Mg(2+) site is built by Ser-104, Asp-243, Asp-245, and Asp-247. At Ser-104 the chain carries Phosphoserine.

Belongs to the phosphohexose mutase family. It depends on Mg(2+) as a cofactor. Activated by phosphorylation.

The catalysed reaction is alpha-D-glucosamine 1-phosphate = D-glucosamine 6-phosphate. Its function is as follows. Catalyzes the conversion of glucosamine-6-phosphate to glucosamine-1-phosphate. This is Phosphoglucosamine mutase from Corynebacterium jeikeium (strain K411).